The sequence spans 288 residues: ATP synthase gamma chain (288 aa).

The protein belongs to the ATPase gamma chain family. In terms of assembly, F-type ATPases have 2 components, CF(1) - the catalytic core - and CF(0) - the membrane proton channel. CF(1) has five subunits: alpha(3), beta(3), gamma(1), delta(1), epsilon(1). CF(0) has three main subunits: a, b and c.

It localises to the cell inner membrane. Its function is as follows. Produces ATP from ADP in the presence of a proton gradient across the membrane. The gamma chain is believed to be important in regulating ATPase activity and the flow of protons through the CF(0) complex. This is ATP synthase gamma chain from Haemophilus ducreyi (strain 35000HP / ATCC 700724).